The sequence spans 137 residues: Cellular retinoic acid-binding protein 1 (137 aa).

The Nuclear localization signal signature appears at 21–31; it reads RALGVNAMLRK. Residue 132–134 coordinates all-trans-retinoate; the sequence is RIY.

It belongs to the calycin superfamily. Fatty-acid binding protein (FABP) family.

The protein resides in the cytoplasm. In terms of biological role, cytosolic CRABPs may regulate the access of retinoic acid to the nuclear retinoic acid receptors. In Pelodiscus sinensis (Chinese softshell turtle), this protein is Cellular retinoic acid-binding protein 1 (CRABP1).